The chain runs to 307 residues: Estrogen receptor (307 aa).

A DNA-binding region (nuclear receptor) is located at residues 1–43 (GHNDYMCPATNQCTIDKNRRKSCQACRLRKCYEVGMMKGGIRK). The NR C4-type zinc finger occupies 7–31 (CPATNQCTIDKNRRKSCQACRLRKC). Positions 44–95 (DRRGGRILKHKRQREEHDNRNAGAIVERRSPNLWPSPLMITHNKKNSPALSL) are hinge. In terms of domain architecture, NR LBD spans 96-307 (TADQIVSALL…HFRHMSNKGM (212 aa)).

The protein belongs to the nuclear hormone receptor family. NR3 subfamily. In terms of assembly, binds DNA as a homodimer. Can form a heterodimer with ER-beta.

The protein localises to the nucleus. Functionally, the steroid hormones and their receptors are involved in the regulation of eukaryotic gene expression and affect cellular proliferation and differentiation in target tissues. This chain is Estrogen receptor (ESR1), found in Aspidoscelis uniparens (Desert grassland whiptail lizard).